Reading from the N-terminus, the 118-residue chain is Large ribosomal subunit protein bL20 (118 aa).

It belongs to the bacterial ribosomal protein bL20 family.

Functionally, binds directly to 23S ribosomal RNA and is necessary for the in vitro assembly process of the 50S ribosomal subunit. It is not involved in the protein synthesizing functions of that subunit. The chain is Large ribosomal subunit protein bL20 from Psychrobacter sp. (strain PRwf-1).